The primary structure comprises 121 residues: Small ribosomal subunit protein bS16 (121 aa).

The interval 88-121 (GKAKLEKEKKAKAKTKEEENEGSKTESGSNEAES) is disordered. Positions 90–111 (AKLEKEKKAKAKTKEEENEGSK) are enriched in basic and acidic residues. Residues 112–121 (TESGSNEAES) are compositionally biased toward polar residues.

This sequence belongs to the bacterial ribosomal protein bS16 family.

The polypeptide is Small ribosomal subunit protein bS16 (Prochlorococcus marinus (strain MIT 9215)).